The chain runs to 535 residues: Thermosome subunit gamma (535 aa).

It belongs to the TCP-1 chaperonin family. As to quaternary structure, forms a Heterooligomeric complex of two stacked eight-membered rings.

Functionally, molecular chaperone; binds unfolded polypeptides in vitro, and has a weak ATPase activity. The sequence is that of Thermosome subunit gamma (thsC) from Saccharolobus solfataricus (strain ATCC 35092 / DSM 1617 / JCM 11322 / P2) (Sulfolobus solfataricus).